Reading from the N-terminus, the 689-residue chain is Glycine--tRNA ligase beta subunit (689 aa).

Belongs to the class-II aminoacyl-tRNA synthetase family. In terms of assembly, tetramer of two alpha and two beta subunits.

The protein localises to the cytoplasm. The enzyme catalyses tRNA(Gly) + glycine + ATP = glycyl-tRNA(Gly) + AMP + diphosphate. This Hamiltonella defensa subsp. Acyrthosiphon pisum (strain 5AT) protein is Glycine--tRNA ligase beta subunit.